A 498-amino-acid polypeptide reads, in one-letter code: DEAD-box ATP-dependent RNA helicase 12 (498 aa).

The disordered stretch occupies residues 1-114 (MNTNRGRYPP…RLPPPDTRYQ (114 aa)). Low complexity predominate over residues 27–65 (SYRQQQPPQDQQYVQRGYSQNPQQMQLQQQHQQQQQQQQ). The span at 74–96 (GNASNANEVVQQTTQPEASSDAN) shows a compositional bias: polar residues. The short motif at 124-152 (NEFEDYFLKRDLLKGIYEKGFEKPSPIQE) is the Q motif element. Residues 155–325 (IPIALTGSDI…DRHLRKPYVI (171 aa)) form the Helicase ATP-binding domain. An ATP-binding site is contributed by 168–175 (AKNGTGKT). Thr-230 is modified (phosphothreonine). The DEAD box signature appears at 273–276 (DEAD). The Helicase C-terminal domain maps to 335 to 495 (GVTQYYAFVE…PIPSNIDQAI (161 aa)).

This sequence belongs to the DEAD box helicase family. DDX6/DHH1 subfamily.

It localises to the cytoplasm. Its subcellular location is the P-body. It carries out the reaction ATP + H2O = ADP + phosphate + H(+). Functionally, ATP-dependent RNA helicase involved in mRNA turnover, and more specifically in mRNA decapping. The protein is DEAD-box ATP-dependent RNA helicase 12 (RH12) of Arabidopsis thaliana (Mouse-ear cress).